A 134-amino-acid polypeptide reads, in one-letter code: Small ribosomal subunit protein uS8 (134 aa).

Belongs to the universal ribosomal protein uS8 family. Part of the 30S ribosomal subunit. Contacts proteins S5 and S12.

In terms of biological role, one of the primary rRNA binding proteins, it binds directly to 16S rRNA central domain where it helps coordinate assembly of the platform of the 30S subunit. The polypeptide is Small ribosomal subunit protein uS8 (Thermotoga sp. (strain RQ2)).